Here is a 349-residue protein sequence, read N- to C-terminus: Protein RecA (349 aa).

Residue 65-72 (GPESSGKT) participates in ATP binding.

The protein belongs to the RecA family.

The protein localises to the cytoplasm. In terms of biological role, can catalyze the hydrolysis of ATP in the presence of single-stranded DNA, the ATP-dependent uptake of single-stranded DNA by duplex DNA, and the ATP-dependent hybridization of homologous single-stranded DNAs. It interacts with LexA causing its activation and leading to its autocatalytic cleavage. In Clostridium acetobutylicum (strain ATCC 824 / DSM 792 / JCM 1419 / IAM 19013 / LMG 5710 / NBRC 13948 / NRRL B-527 / VKM B-1787 / 2291 / W), this protein is Protein RecA.